Here is a 268-residue protein sequence, read N- to C-terminus: Movement protein (268 aa).

The disordered stretch occupies residues 218–246; that stretch reads SDVRKGKISSSDRSAPNKNYRNVKDFGGM. The span at 225–237 shows a compositional bias: polar residues; sequence ISSSDRSAPNKNY.

It belongs to the tobamovirus movement protein family. Binds to host RBCS at the plasmodesmata; this interaction seems required for viral systemic movement. In resistant plants, interacts with host MBP2C at host microtubules; this interaction prevents virus cell to cell movement. In resistant plants, interacts with host resistance (R) protein (e.g. tomato ToMV resistance protein TM-2(2), AC Q71BG9) at the host plasma membrane; this interaction triggers host defense responses leading to programmed cell death.

It is found in the host cytoplasm. The protein resides in the host cytoskeleton. The protein localises to the host cell junction. It localises to the host plasmodesma. Transports viral genome to neighboring plant cells directly through plasmosdesmata, without any budding. The movement protein allows efficient cell to cell propagation, by bypassing the host cell wall barrier. Forms a ribonucleoprotein complex with viral RNA. Binds microtubules and modulates microtubule stability. Can bind double-stranded DNA. Triggers host hypersensitive defense reaction in incompatible plants harboring resistance (R) proteins. In Nicotiana tabacum (Common tobacco), this protein is Movement protein (MP).